A 579-amino-acid polypeptide reads, in one-letter code: UvrABC system protein C (579 aa).

A GIY-YIG domain is found at 12–89 (DATGVYIFRD…IKRYRPPYNV (78 aa)). A UVR domain is found at 193 to 228 (QEVIEVLEEEMKEASERLEFERAARIRDQIESIREV).

Belongs to the UvrC family. As to quaternary structure, interacts with UvrB in an incision complex.

The protein localises to the cytoplasm. In terms of biological role, the UvrABC repair system catalyzes the recognition and processing of DNA lesions. UvrC both incises the 5' and 3' sides of the lesion. The N-terminal half is responsible for the 3' incision and the C-terminal half is responsible for the 5' incision. In Methanothermobacter thermautotrophicus (strain ATCC 29096 / DSM 1053 / JCM 10044 / NBRC 100330 / Delta H) (Methanobacterium thermoautotrophicum), this protein is UvrABC system protein C.